The chain runs to 394 residues: Phosphopentomutase (394 aa).

Asp14, Asp287, His292, Asp328, His329, and His340 together coordinate Mn(2+).

The protein belongs to the phosphopentomutase family. The cofactor is Mn(2+).

The protein localises to the cytoplasm. It carries out the reaction 2-deoxy-alpha-D-ribose 1-phosphate = 2-deoxy-D-ribose 5-phosphate. The catalysed reaction is alpha-D-ribose 1-phosphate = D-ribose 5-phosphate. It functions in the pathway carbohydrate degradation; 2-deoxy-D-ribose 1-phosphate degradation; D-glyceraldehyde 3-phosphate and acetaldehyde from 2-deoxy-alpha-D-ribose 1-phosphate: step 1/2. Isomerase that catalyzes the conversion of deoxy-ribose 1-phosphate (dRib-1-P) and ribose 1-phosphate (Rib-1-P) to deoxy-ribose 5-phosphate (dRib-5-P) and ribose 5-phosphate (Rib-5-P), respectively. The sequence is that of Phosphopentomutase from Listeria welshimeri serovar 6b (strain ATCC 35897 / DSM 20650 / CCUG 15529 / CIP 8149 / NCTC 11857 / SLCC 5334 / V8).